A 116-amino-acid polypeptide reads, in one-letter code: Methionine-R-sulfoxide reductase B1 (116 aa).

Residues 1–106 enclose the MsrB domain; sequence MSFCSFFGGE…FSSSLKFVPK (106 aa). Positions 23, 26, 71, and 74 each coordinate Zn(2+). Catalysis depends on Sec-95, which acts as the Nucleophile. Sec-95 is a non-standard amino acid (selenocysteine).

The protein belongs to the MsrB Met sulfoxide reductase family. Zn(2+) serves as cofactor. In terms of processing, truncated MSRB1/SEPX1 proteins produced by failed UGA/Sec decoding are ubiquitinated by the CRL2(FEM1C) E3 ubiquitin-protein ligase complex.

It is found in the cytoplasm. The protein localises to the nucleus. It localises to the cytoskeleton. The catalysed reaction is L-methionyl-[protein] + [thioredoxin]-disulfide + H2O = L-methionyl-(R)-S-oxide-[protein] + [thioredoxin]-dithiol. The enzyme catalyses [thioredoxin]-disulfide + L-methionine + H2O = L-methionine (R)-S-oxide + [thioredoxin]-dithiol. Methionine-sulfoxide reductase that specifically reduces methionine (R)-sulfoxide back to methionine. While in many cases, methionine oxidation is the result of random oxidation following oxidative stress, methionine oxidation is also a post-translational modification that takes place on specific residue. Acts as a regulator of actin assembly by reducing methionine (R)-sulfoxide mediated by MICALs (MICAL1, MICAL2 or MICAL3) on actin, thereby promoting filament repolymerization. Plays a role in innate immunity by reducing oxidized actin, leading to actin repolymerization in macrophages. The chain is Methionine-R-sulfoxide reductase B1 (Msrb1) from Mus musculus (Mouse).